Here is a 156-residue protein sequence, read N- to C-terminus: MGFSDAGIYLSDPNNLCQTELGFFHEPSLGFSDQSDPQNEFHITPPIYQELQDQDLEPKSQETNNCSRKEGATVKKEEEEEDDYCKTPTRSDQILSAMPRICPPAPRKPKRVPSRSLKVRNSYRSKRMIILNVSREIDCLFNPTSLCNKIKKARYI.

The interval 52–90 is disordered; sequence QDQDLEPKSQETNNCSRKEGATVKKEEEEEDDYCKTPTR. Positions 67 to 77 are enriched in basic and acidic residues; that stretch reads SRKEGATVKKE.

Functionally, probable cyclin-dependent protein kinase (CDK) inhibitor that functions as a repressor of mitosis in the endoreduplication cell cycle. This Arabidopsis thaliana (Mouse-ear cress) protein is Cyclin-dependent protein kinase inhibitor SMR10.